The sequence spans 724 residues: Palmitoyltransferase AKR1 (724 aa).

Residues 1-308 (MSGQLNVAED…HAKMVTFFTP (308 aa)) are Cytoplasmic-facing. 6 ANK repeats span residues 54–84 (PTLVKYHAACQRGDLKTVKDMIEAGVIDVKA), 90–119 (EQVSGLHWASANNRLNLVRYLIAQGADVNI), 124–153 (LEATPLHWASKSGYVYIVHCLLEHGADPLI), 157–187 (QGYNLLHTSTFSSEVMLITYVLFTGQIPVDS), 191–220 (TGKTALHWAAYQGDPNTVEALLKFDADVRV), and 224–253 (GGFTPLHWATVKGHPHVLKALIEHGSDVFL). Residues 309–329 (WLILGLILSFFAYFSILLAIL) traverse the membrane as a helical segment. Residues 330-331 (GC) are Lumenal-facing. A helical membrane pass occupies residues 332–352 (LLTVLAAGYGLYNFVFPSFIL). At 353 to 360 (MKRIVIFK) the chain is on the cytoplasmic side. Residues 361–381 (TPLLAGILSGTIFWLLYVWLF) traverse the membrane as a helical segment. Topologically, residues 382–392 (KMLPATFDDEP) are lumenal. A helical membrane pass occupies residues 393–413 (ILNLTVFALFAGVVFLLTKLL). The Cytoplasmic portion of the chain corresponds to 414–489 (QSDPGYIVPA…YNYIGFRNHK (76 aa)). The DHHC domain maps to 446–496 (HFCIHSWIRLPLRAKYKRFVHSVILRYDHYCPWIYNYIGFRNHKIFIYFIL). The S-palmitoyl cysteine intermediate role is filled by Cys-476. Residues 490–510 (IFIYFILLLDLGILALAKLCL) traverse the membrane as a helical segment. Residues 511-543 (EYFDELKDHAKNKDALKCSILSKDLCAGFTYDP) are Lumenal-facing. Residues 544 to 564 (FTLFLLEWVCVQGMWILALSF) form a helical membrane-spanning segment. The Cytoplasmic portion of the chain corresponds to 565-724 (VQFFECLKGV…ERVISIEEIV (160 aa)).

It belongs to the DHHC palmitoyltransferase family. AKR/ZDHHC17 subfamily.

It localises to the early endosome membrane. Its subcellular location is the golgi apparatus membrane. The enzyme catalyses L-cysteinyl-[protein] + hexadecanoyl-CoA = S-hexadecanoyl-L-cysteinyl-[protein] + CoA. In terms of biological role, palmitoyltransferase specific for casein kinase 1. The chain is Palmitoyltransferase AKR1 (AKR1) from Eremothecium gossypii (strain ATCC 10895 / CBS 109.51 / FGSC 9923 / NRRL Y-1056) (Yeast).